Reading from the N-terminus, the 349-residue chain is 4-hydroxy-3-methylbut-2-en-1-yl diphosphate synthase (flavodoxin) (349 aa).

[4Fe-4S] cluster is bound by residues C265, C268, C300, and E307.

Belongs to the IspG family. [4Fe-4S] cluster serves as cofactor.

It carries out the reaction (2E)-4-hydroxy-3-methylbut-2-enyl diphosphate + oxidized [flavodoxin] + H2O + 2 H(+) = 2-C-methyl-D-erythritol 2,4-cyclic diphosphate + reduced [flavodoxin]. The protein operates within isoprenoid biosynthesis; isopentenyl diphosphate biosynthesis via DXP pathway; isopentenyl diphosphate from 1-deoxy-D-xylulose 5-phosphate: step 5/6. Functionally, converts 2C-methyl-D-erythritol 2,4-cyclodiphosphate (ME-2,4cPP) into 1-hydroxy-2-methyl-2-(E)-butenyl 4-diphosphate. The polypeptide is 4-hydroxy-3-methylbut-2-en-1-yl diphosphate synthase (flavodoxin) (Thermodesulfovibrio yellowstonii (strain ATCC 51303 / DSM 11347 / YP87)).